A 350-amino-acid chain; its full sequence is MIELKGISQHFRGAGGTDVHALRDVDLSIDKGEIFGIIGRSGAGKSTLVRVINLLNRPTSGTVTVAGQSLTALNADGLRQARRKIGMIFQHFNLLSSRTVYDNVALPLELAGTPRERIREIVLPLLELVGLDAHKDRYPAQISGGQKQRVGIARALASQPDVLLSDEATSALDPETTRSILDLLRKINRELGLTIVLITHQMEVIKQVCDRVAVLDAGRVVELGRVIDVFLKPRHDVTRALIGEVISQELPPSVLARVESRLVAARERGGRDHLFRLAFTGAGVDQPVLAQAIRNYGLDFNILHGHIDEIQGQAFGSLAILASGESADIDNAMHFLREQGVVVEEINHVV.

The 241-residue stretch at isoleucine 2–isoleucine 242 folds into the ABC transporter domain. Glycine 39–serine 46 provides a ligand contact to ATP.

This sequence belongs to the ABC transporter superfamily. Methionine importer (TC 3.A.1.24) family. The complex is composed of two ATP-binding proteins (MetN), two transmembrane proteins (MetI) and a solute-binding protein (MetQ).

The protein localises to the cell inner membrane. The enzyme catalyses L-methionine(out) + ATP + H2O = L-methionine(in) + ADP + phosphate + H(+). It catalyses the reaction D-methionine(out) + ATP + H2O = D-methionine(in) + ADP + phosphate + H(+). Part of the ABC transporter complex MetNIQ involved in methionine import. Responsible for energy coupling to the transport system. This is Methionine import ATP-binding protein MetN from Ralstonia nicotianae (strain ATCC BAA-1114 / GMI1000) (Ralstonia solanacearum).